We begin with the raw amino-acid sequence, 605 residues long: Elongation factor 4 (605 aa).

The region spanning 9–192 (SRTRNFCIIA…AIIARIPSPK (184 aa)) is the tr-type G domain. GTP contacts are provided by residues 21–26 (DHGKST) and 139–142 (NKID).

It belongs to the TRAFAC class translation factor GTPase superfamily. Classic translation factor GTPase family. LepA subfamily.

It localises to the cell inner membrane. The enzyme catalyses GTP + H2O = GDP + phosphate + H(+). Functionally, required for accurate and efficient protein synthesis under certain stress conditions. May act as a fidelity factor of the translation reaction, by catalyzing a one-codon backward translocation of tRNAs on improperly translocated ribosomes. Back-translocation proceeds from a post-translocation (POST) complex to a pre-translocation (PRE) complex, thus giving elongation factor G a second chance to translocate the tRNAs correctly. Binds to ribosomes in a GTP-dependent manner. The protein is Elongation factor 4 of Chlorobium limicola (strain DSM 245 / NBRC 103803 / 6330).